The primary structure comprises 1049 residues: RTX-III toxin determinant A from serotype 2 (1049 aa).

The next 3 membrane-spanning stretches (helical) occupy residues 154-170 (TIIS…LAGI), 315-331 (ALIA…LAFL), and 397-413 (LVGA…TGLI). Hemolysin-type calcium-binding repeat units follow at residues 743–760 (KGSK…DDLL), 761–778 (NGND…NDEL), 779–796 (RGDN…DDKL), 797–814 (LGGN…NDEL), 825–842 (RGGK…SDLL), and 843–860 (DGGE…SDFY).

It belongs to the RTX prokaryotic toxin (TC 1.C.11) family. Palmitoylated by ApxIIIC. The toxin only becomes active when modified.

The protein localises to the secreted. Its subcellular location is the host cell membrane. Its function is as follows. Does not have hemolytic activity but shows a strong cytotoxicity towards alveolar macrophages and neutrophils. The protein is RTX-III toxin determinant A from serotype 2 (apxIIIA) of Actinobacillus pleuropneumoniae (Haemophilus pleuropneumoniae).